The following is a 65-amino-acid chain: Large ribosomal subunit protein bL35 (65 aa).

It belongs to the bacterial ribosomal protein bL35 family.

The chain is Large ribosomal subunit protein bL35 from Stenotrophomonas maltophilia (strain R551-3).